The primary structure comprises 207 residues: Large ribosomal subunit protein uL4 (207 aa).

Positions 50–75 (KTKTVSEVSGTTKKPFKQKGTGNARQ) are disordered.

The protein belongs to the universal ribosomal protein uL4 family. As to quaternary structure, part of the 50S ribosomal subunit.

One of the primary rRNA binding proteins, this protein initially binds near the 5'-end of the 23S rRNA. It is important during the early stages of 50S assembly. It makes multiple contacts with different domains of the 23S rRNA in the assembled 50S subunit and ribosome. Functionally, forms part of the polypeptide exit tunnel. The sequence is that of Large ribosomal subunit protein uL4 from Rickettsia akari (strain Hartford).